The sequence spans 287 residues: Thioredoxin-related transmembrane protein 2 (287 aa).

The signal sequence occupies residues 1–35 (MAVLAPLLAFLYAVPGLLRWVSQPYYLLSALLSVS). Residues 36 to 112 (FLLVRKVPPV…ILFFRLDLRM (77 aa)) are Extracellular-facing. The chain crosses the membrane as a helical span at residues 113 to 133 (GLLYITLCIVFLMTCKPPLYL). The Cytoplasmic portion of the chain corresponds to 134–287 (GPEHIKYFSD…NEYNDSKKDQ (154 aa)). The region spanning 135 to 269 (PEHIKYFSDK…LYQKAKKIRK (135 aa)) is the Thioredoxin domain. Residues 284–287 (KKDQ) carry the Di-lysine motif motif.

As to quaternary structure, monomer. Homodimer; disulfide-linked. Occurs in both reduced and oxidized monomeric form. Oxidative conditions increase homodimerization.

The protein resides in the endoplasmic reticulum membrane. It is found in the mitochondrion membrane. Its function is as follows. Endoplasmic reticulum and mitochondria-associated protein that probably functions as a regulator of cellular redox state and thereby regulates protein post-translational modification, protein folding and mitochondrial activity. This Xenopus tropicalis (Western clawed frog) protein is Thioredoxin-related transmembrane protein 2 (tmx2).